Reading from the N-terminus, the 202-residue chain is Orotate phosphoribosyltransferase (202 aa).

113–121 (EDIITTGGS) is a 5-phospho-alpha-D-ribose 1-diphosphate binding site. 2 residues coordinate orotate: T117 and R145.

The protein belongs to the purine/pyrimidine phosphoribosyltransferase family. PyrE subfamily. In terms of assembly, homodimer. It depends on Mg(2+) as a cofactor.

The catalysed reaction is orotidine 5'-phosphate + diphosphate = orotate + 5-phospho-alpha-D-ribose 1-diphosphate. The protein operates within pyrimidine metabolism; UMP biosynthesis via de novo pathway; UMP from orotate: step 1/2. Functionally, catalyzes the transfer of a ribosyl phosphate group from 5-phosphoribose 1-diphosphate to orotate, leading to the formation of orotidine monophosphate (OMP). The chain is Orotate phosphoribosyltransferase from Campylobacter lari (strain RM2100 / D67 / ATCC BAA-1060).